Here is a 243-residue protein sequence, read N- to C-terminus: 7-cyano-7-deazaguanine synthase (243 aa).

An ATP-binding site is contributed by 14–24; that stretch reads FSGGQDSATCL. Residues Cys202, Cys217, Cys220, and Cys223 each contribute to the Zn(2+) site.

It belongs to the QueC family. Zn(2+) is required as a cofactor.

It carries out the reaction 7-carboxy-7-deazaguanine + NH4(+) + ATP = 7-cyano-7-deazaguanine + ADP + phosphate + H2O + H(+). It participates in purine metabolism; 7-cyano-7-deazaguanine biosynthesis. Catalyzes the ATP-dependent conversion of 7-carboxy-7-deazaguanine (CDG) to 7-cyano-7-deazaguanine (preQ(0)). The chain is 7-cyano-7-deazaguanine synthase from Paraburkholderia phymatum (strain DSM 17167 / CIP 108236 / LMG 21445 / STM815) (Burkholderia phymatum).